Reading from the N-terminus, the 256-residue chain is Thiazole synthase (256 aa).

K98 (schiff-base intermediate with DXP) is an active-site residue. 1-deoxy-D-xylulose 5-phosphate-binding positions include G159, 185 to 186 (AG), and 207 to 208 (NT).

This sequence belongs to the ThiG family. Homotetramer. Forms heterodimers with either ThiH or ThiS.

It is found in the cytoplasm. It carries out the reaction [ThiS sulfur-carrier protein]-C-terminal-Gly-aminoethanethioate + 2-iminoacetate + 1-deoxy-D-xylulose 5-phosphate = [ThiS sulfur-carrier protein]-C-terminal Gly-Gly + 2-[(2R,5Z)-2-carboxy-4-methylthiazol-5(2H)-ylidene]ethyl phosphate + 2 H2O + H(+). Its pathway is cofactor biosynthesis; thiamine diphosphate biosynthesis. Catalyzes the rearrangement of 1-deoxy-D-xylulose 5-phosphate (DXP) to produce the thiazole phosphate moiety of thiamine. Sulfur is provided by the thiocarboxylate moiety of the carrier protein ThiS. In vitro, sulfur can be provided by H(2)S. The polypeptide is Thiazole synthase (Syntrophobacter fumaroxidans (strain DSM 10017 / MPOB)).